A 106-amino-acid polypeptide reads, in one-letter code: Large ribosomal subunit protein bL21 (106 aa).

It belongs to the bacterial ribosomal protein bL21 family. Part of the 50S ribosomal subunit. Contacts protein L20.

Its function is as follows. This protein binds to 23S rRNA in the presence of protein L20. The protein is Large ribosomal subunit protein bL21 of Xylella fastidiosa (strain Temecula1 / ATCC 700964).